The sequence spans 475 residues: Glycogen synthase (475 aa).

Lysine 15 contributes to the ADP-alpha-D-glucose binding site.

This sequence belongs to the glycosyltransferase 1 family. Bacterial/plant glycogen synthase subfamily.

It catalyses the reaction [(1-&gt;4)-alpha-D-glucosyl](n) + ADP-alpha-D-glucose = [(1-&gt;4)-alpha-D-glucosyl](n+1) + ADP + H(+). The protein operates within glycan biosynthesis; glycogen biosynthesis. In terms of biological role, synthesizes alpha-1,4-glucan chains using ADP-glucose. The polypeptide is Glycogen synthase (Chlamydia abortus (strain DSM 27085 / S26/3) (Chlamydophila abortus)).